The following is a 348-amino-acid chain: Selenide, water dikinase (348 aa).

Residue Sec-17 is part of the active site. Position 17 (Sec-17) is a non-standard amino acid, selenocysteine. ATP contacts are provided by residues Lys-20 and Thr-48–Asp-50. Mg(2+) is bound at residue Asp-51. Residues Asp-68, Asp-91, and Gly-138–Thr-140 contribute to the ATP site. Asp-91 contacts Mg(2+). Asp-226 contributes to the Mg(2+) binding site.

Belongs to the selenophosphate synthase 1 family. Class I subfamily. As to quaternary structure, homodimer. Requires Mg(2+) as cofactor.

The catalysed reaction is hydrogenselenide + ATP + H2O = selenophosphate + AMP + phosphate + 2 H(+). Its function is as follows. Synthesizes selenophosphate from selenide and ATP. The protein is Selenide, water dikinase of Clostridioides difficile (strain 630) (Peptoclostridium difficile).